The chain runs to 180 residues: Immediate early response gene 2 protein (180 aa).

Positions 53-135 are disordered; the sequence is MSEKSGQSVT…KRRSKTATDS (83 aa). Positions 56-92 are enriched in polar residues; that stretch reads KSGQSVTEECTSHTQEPMDTSSSTATPLRETSGQSSE. Residues 93–103 show a composition bias toward basic and acidic residues; that stretch reads DGQRSGLEGHP.

Belongs to the IER family. In terms of assembly, interacts with FIBPB.

Its subcellular location is the nucleus. It is found in the cytoplasm. DNA-binding protein that seems to act as a transcription factor. Mediates with FIBPB FGF-signaling in Kupffer's vesicle ciliogenesis and in the establishment of laterality in the embryo. In Danio rerio (Zebrafish), this protein is Immediate early response gene 2 protein.